The chain runs to 265 residues: Putative N(omega)-hydroxy-L-arginine synthase DcsA (265 aa).

It belongs to the DcsA family. The cofactor is heme.

Involved in the biosynthesis of the antibiotic D-cycloserine (DCS), a cyclic structural analog of D-alanine, used as an antitubercular agent. Could catalyze the production of N(omega)-hydroxy-L-arginine (NHA) from L-arginine. This chain is Putative N(omega)-hydroxy-L-arginine synthase DcsA, found in Streptomyces lavendulae.